The following is a 639-amino-acid chain: ADP-ribosylation factor-binding protein GGA1 (639 aa).

Met-1 carries the N-acetylmethionine modification. The VHS domain maps to 17 to 147 (ATNPLNKELD…MLKKQGIVKS (131 aa)). Residues 114 to 274 (KILELLYSWT…RLASDTEDND (161 aa)) form an interaction with ARF3 region. A GAT domain is found at 171-299 (DEEKSKMLAR…VINLYKQLVR (129 aa)). Position 185 is a phosphoserine (Ser-185). The segment at 300-509 (GEEVNGDATA…ITVPLESIKP (210 aa)) is unstructured hinge. 2 disordered regions span residues 320-421 (LDLS…SGLD) and 434-492 (SLPP…QPVP). Ser-355 is subject to Phosphoserine; by CK2. Positions 358–362 (DDELM) match the Autoinhibitory motif. Positions 381 to 390 (GWNSFQSSDA) are enriched in polar residues. Ser-418 is modified (phosphoserine). Low complexity predominate over residues 462–480 (SSSCSSPSSSATSLLHTVS). The segment covering 481 to 490 (PEPPRPPQQP) has biased composition (pro residues). Residues 510-631 (SNILPVTVYD…NEMGDVDQFP (122 aa)) enclose the GAE domain.

The protein belongs to the GGA protein family. As to quaternary structure, monomer. Interacts with GGA2 and GGA3. Binds to clathrin and activated ARFs, including ARF1, ARF5 and ARF6. Interacts with RABEP1. Interacts with RABGEF1. Interacts with the type-I membrane proteins LRP3, M6PR/CD-MPR and IGF2R/CI-MPR. Interacts (via N-terminal VHS domain) with SORL1/sorLA and SORT1 (via C-terminal cytosolic domain). Interacts with EPN4. Interacts with CCDC91. Interacts with HEATR5B/p200a. Interacts with SYNRG/gamma-synergin. Interacts (via GAE doamin) with NECAP1 and NECAP2. Interacts (via GAE domain) with AFTPH/aftiphilin. Interacts with TSG101 and UBC. Interacts with RNF11. Interacts (via VHS domain) with BACE1 (via DXXLL motif); the interaction highly increases when BACE1 is phosphorylated at 'Ser-498'. Interacts with CNST. Interacts with ADRA2B. Interacts with ARL3; the interaction recruits, in collaboration with RABEP1, PKD1:PKD2 complex to trans-Golgi network and is required for ciliary targeting. Phosphorylated by CK2 and dephosphorylated by PP2A. Phosphorylation of GGA1 allows the internal DXXLL motif to bind the VHS domain and to inhibit the recognition of cargo signals. Post-translationally, ubiquitinated. In terms of tissue distribution, ubiquitously expressed.

The protein resides in the golgi apparatus. The protein localises to the trans-Golgi network membrane. Its subcellular location is the endosome membrane. It is found in the early endosome membrane. Plays a role in protein sorting and trafficking between the trans-Golgi network (TGN) and endosomes. Mediates the ARF-dependent recruitment of clathrin to the TGN and binds ubiquitinated proteins and membrane cargo molecules with a cytosolic acidic cluster-dileucine (DXXLL) motif. Mediates export of the GPCR receptor ADRA2B to the cell surface. Required for targeting PKD1:PKD2 complex from the trans-Golgi network to the cilium membrane. Regulates retrograde transport of proteins such as phosphorylated form of BACE1 from endosomes to the trans-Golgi network. The protein is ADP-ribosylation factor-binding protein GGA1 (GGA1) of Homo sapiens (Human).